The sequence spans 630 residues: Probable potassium transport system protein Kup (630 aa).

The next 12 membrane-spanning stretches (helical) occupy residues 17 to 37 (LAIA…LYSL), 51 to 71 (PSAI…VVGI), 105 to 125 (ITGL…GDAV), 144 to 164 (PQLS…LFWI), 175 to 195 (LFGP…IYHI), 218 to 238 (VLLA…AEAL), 255 to 275 (YVLV…LLLL), 283 to 303 (PFFL…STVA), 344 to 364 (IYVP…VIGF), 374 to 394 (YGIA…VVMV), 402 to 422 (LLVA…FGAN), and 428 to 448 (QGGW…MTWY).

Belongs to the HAK/KUP transporter (TC 2.A.72) family.

It localises to the cell inner membrane. It catalyses the reaction K(+)(in) + H(+)(in) = K(+)(out) + H(+)(out). Its function is as follows. Transport of potassium into the cell. Likely operates as a K(+):H(+) symporter. The sequence is that of Probable potassium transport system protein Kup from Burkholderia pseudomallei (strain K96243).